The sequence spans 372 residues: MSIAYNKIAVRVRLGALRRNFETLRRMSPAAMPVIKSDAYGHGLLPVARTLEAAGADAFAAGTVGECAQLRDGGIPGRIVALLGATDAADAECCVARSIVPAVYSADQLEMLAGRAAPGQQVDIALKFDTGMARLGFSEADLPALLDRLHARPMLRPVLVMSHLAVSDDPSRSDFTRQQGEAFGRILAGVRADWPAAQGSLANSAALLAHPELHFDVQRPGIALYGANPLRGTAQEHLGDGLQPAMDVAAPILQVHPLPAGRSISYGRTFTAPRDMTVAIVATGYADAYSRGLSGKGAMTVHGRRVPILGRVCMQMTAVDVTDVPGVAAGDDAYLLGGPGEALTPDELADLWGTISYEVLCLLGMNPRTHRE.

Lys36 acts as the Proton acceptor; specific for D-alanine in catalysis. Lys36 bears the N6-(pyridoxal phosphate)lysine mark. Residue Arg134 participates in substrate binding. The Proton acceptor; specific for L-alanine role is filled by Tyr266. Met314 contributes to the substrate binding site.

Belongs to the alanine racemase family. Requires pyridoxal 5'-phosphate as cofactor.

The catalysed reaction is L-alanine = D-alanine. Its pathway is amino-acid biosynthesis; D-alanine biosynthesis; D-alanine from L-alanine: step 1/1. Functionally, catalyzes the interconversion of L-alanine and D-alanine. May also act on other amino acids. This is Alanine racemase (alr) from Nitratidesulfovibrio vulgaris (strain DSM 19637 / Miyazaki F) (Desulfovibrio vulgaris).